A 294-amino-acid chain; its full sequence is MSNLKEIKRKIKSVHNTQKTTNAMKLVSTAKLRKAEEAAKKSKVFAQKIDEVLSEIAFKINQYEGLDDKLPFFRKKDNIEKMDIIFVTADKGLCGGFNIKTIKAVNEMLEDCKTKKIKVRLRAIGKTGIEYFNFQNIEILEKYLDTSSSPDYDKACAIIQKAVDDFVNGVTDKIVIIHNGYKNMISQEIRINELLPVEAIVSKEEQKSESLMDLEPEDEEILNDLLKTYFEYNMYFSLVDSLAAEHSARMQAMDNATNNAKARVKQLNLAYNKARQESITTELIEIISGVESMK.

It belongs to the ATPase gamma chain family. In terms of assembly, F-type ATPases have 2 components, CF(1) - the catalytic core - and CF(0) - the membrane proton channel. CF(1) has five subunits: alpha(3), beta(3), gamma(1), delta(1), epsilon(1). CF(0) has three main subunits: a, b and c.

It is found in the cell inner membrane. Its function is as follows. Produces ATP from ADP in the presence of a proton gradient across the membrane. The gamma chain is believed to be important in regulating ATPase activity and the flow of protons through the CF(0) complex. In Campylobacter lari (strain RM2100 / D67 / ATCC BAA-1060), this protein is ATP synthase gamma chain.